The sequence spans 145 residues: FAD synthase (145 aa).

ATP is bound by residues T5 to F6, H10 to H13, D92, and Y119.

The protein belongs to the archaeal FAD synthase family. As to quaternary structure, homodimer. It depends on a divalent metal cation as a cofactor.

The enzyme catalyses FMN + ATP + H(+) = FAD + diphosphate. The protein operates within cofactor biosynthesis; FAD biosynthesis; FAD from FMN: step 1/1. Catalyzes the transfer of the AMP portion of ATP to flavin mononucleotide (FMN) to produce flavin adenine dinucleotide (FAD) coenzyme. This is FAD synthase from Methanothermus fervidus (strain ATCC 43054 / DSM 2088 / JCM 10308 / V24 S).